Reading from the N-terminus, the 514-residue chain is RNA-splicing ligase RtcB homolog (514 aa).

Mn(2+) contacts are provided by D128, C131, H236, H268, and H362. 235-239 (NHYAE) is a GMP binding site. Residues 362-363 (HN), 411-414 (GGTM), S418, 437-440 (HGAG), and K513 each bind GMP. H437 functions as the GMP-histidine intermediate in the catalytic mechanism.

Belongs to the RtcB family. As to quaternary structure, catalytic component of the tRNA-splicing ligase complex. The cofactor is Mn(2+).

The catalysed reaction is a 3'-end 3'-phospho-ribonucleotide-RNA + a 5'-end dephospho-ribonucleoside-RNA + GTP = a ribonucleotidyl-ribonucleotide-RNA + GMP + diphosphate. The enzyme catalyses a 3'-end 2',3'-cyclophospho-ribonucleotide-RNA + a 5'-end dephospho-ribonucleoside-RNA + GTP + H2O = a ribonucleotidyl-ribonucleotide-RNA + GMP + diphosphate + H(+). Its function is as follows. Catalytic subunit of the tRNA-splicing ligase complex that acts by directly joining spliced tRNA halves to mature-sized tRNAs by incorporating the precursor-derived splice junction phosphate into the mature tRNA as a canonical 3',5'-phosphodiester. May act as an RNA ligase with broad substrate specificity, and may function toward other RNAs. The chain is RNA-splicing ligase RtcB homolog from Ostreococcus lucimarinus (strain CCE9901).